A 70-amino-acid polypeptide reads, in one-letter code: Protein SlyX homolog (70 aa).

The protein belongs to the SlyX family.

This chain is Protein SlyX homolog, found in Rhizobium meliloti (strain 1021) (Ensifer meliloti).